The sequence spans 470 residues: Small ribosomal subunit protein bS1m (470 aa).

The interval 436–470 is disordered; sequence FKKIPMTAARLRGRYENSDSPSSPTMSGSSGYGLR. Positions 453–464 are enriched in low complexity; sequence SDSPSSPTMSGS.

It belongs to the bacterial ribosomal protein bS1 family. As to quaternary structure, component of the mitochondrial small ribosomal subunit (mt-SSU). Mature N.crassa 74S mitochondrial ribosomes consist of a small (37S) and a large (54S) subunit. The 37S small subunit contains a 16S ribosomal RNA (16S mt-rRNA) and 32 different proteins. The 54S large subunit contains a 23S rRNA (23S mt-rRNA) and 42 different proteins.

Its subcellular location is the mitochondrion. Its function is as follows. Component of the mitochondrial ribosome (mitoribosome), a dedicated translation machinery responsible for the synthesis of mitochondrial genome-encoded proteins, including at least some of the essential transmembrane subunits of the mitochondrial respiratory chain. The mitoribosomes are attached to the mitochondrial inner membrane and translation products are cotranslationally integrated into the membrane. This Neurospora crassa (strain ATCC 24698 / 74-OR23-1A / CBS 708.71 / DSM 1257 / FGSC 987) protein is Small ribosomal subunit protein bS1m (mrp51).